A 358-amino-acid polypeptide reads, in one-letter code: Oligopeptide transport ATP-binding protein OppD (358 aa).

In terms of domain architecture, ABC transporter spans 8-259 (LEVKDLAISF…PRHPYTWGLL (252 aa)). Residue 44–51 (GESGSGKS) coordinates ATP.

The protein belongs to the ABC transporter superfamily. The complex is composed of two ATP-binding proteins (OppD and OppF), two transmembrane proteins (OppB and OppC) and a solute-binding protein (OppA).

The protein localises to the cell membrane. The catalysed reaction is a [peptide](out) + ATP + H2O = a [peptide](in) + ADP + phosphate + H(+). Its function is as follows. Part of the ABC transporter complex OppABCDF involved in the uptake of oligopeptides. Probably responsible for energy coupling to the transport system. Required for sporulation and genetic competence. This is Oligopeptide transport ATP-binding protein OppD from Bacillus subtilis (strain 168).